Consider the following 178-residue polypeptide: UPF0114 protein HPSH_00970 (178 aa).

A run of 4 helical transmembrane segments spans residues 15-35, 54-74, 102-122, and 145-165; these read WLLA…GYVF, LVLS…VLMV, FNAL…IFLL, and PIFW…LAAV.

It belongs to the UPF0114 family.

Its subcellular location is the cell membrane. The polypeptide is UPF0114 protein HPSH_00970 (Helicobacter pylori (strain Shi470)).